The sequence spans 62 residues: UPF0434 protein Rleg2_3773 (62 aa).

It belongs to the UPF0434 family.

The polypeptide is UPF0434 protein Rleg2_3773 (Rhizobium leguminosarum bv. trifolii (strain WSM2304)).